A 288-amino-acid chain; its full sequence is Glycine--tRNA ligase alpha subunit (288 aa).

Belongs to the class-II aminoacyl-tRNA synthetase family. As to quaternary structure, tetramer of two alpha and two beta subunits.

It localises to the cytoplasm. The enzyme catalyses tRNA(Gly) + glycine + ATP = glycyl-tRNA(Gly) + AMP + diphosphate. The protein is Glycine--tRNA ligase alpha subunit of Rickettsia peacockii (strain Rustic).